The chain runs to 108 residues: Small ribosomal subunit protein uS10 (108 aa).

This sequence belongs to the universal ribosomal protein uS10 family. As to quaternary structure, part of the 30S ribosomal subunit.

Involved in the binding of tRNA to the ribosomes. The sequence is that of Small ribosomal subunit protein uS10 from Mycoplasma pneumoniae (strain ATCC 29342 / M129 / Subtype 1) (Mycoplasmoides pneumoniae).